Consider the following 125-residue polypeptide: Phosphoribosyl-AMP cyclohydrolase (125 aa).

Residue Asp-74 coordinates Mg(2+). Cys-75 contributes to the Zn(2+) binding site. Asp-76 and Asp-78 together coordinate Mg(2+). Residues Cys-92 and Cys-99 each coordinate Zn(2+).

Belongs to the PRA-CH family. As to quaternary structure, homodimer. Mg(2+) is required as a cofactor. It depends on Zn(2+) as a cofactor.

Its subcellular location is the cytoplasm. It carries out the reaction 1-(5-phospho-beta-D-ribosyl)-5'-AMP + H2O = 1-(5-phospho-beta-D-ribosyl)-5-[(5-phospho-beta-D-ribosylamino)methylideneamino]imidazole-4-carboxamide. It participates in amino-acid biosynthesis; L-histidine biosynthesis; L-histidine from 5-phospho-alpha-D-ribose 1-diphosphate: step 3/9. Catalyzes the hydrolysis of the adenine ring of phosphoribosyl-AMP. In Desulfatibacillum aliphaticivorans, this protein is Phosphoribosyl-AMP cyclohydrolase.